The following is a 557-amino-acid chain: Urocanate hydratase (557 aa).

Positions 1–20 (MSNPRHNEREVRSPRGDELN) are disordered. NAD(+)-binding positions include 52–53 (GG), Gln-130, 176–178 (GMG), Glu-196, Arg-201, 242–243 (NA), 263–267 (QTSAH), 273–274 (YL), and Tyr-322. Residue Cys-410 is part of the active site. An NAD(+)-binding site is contributed by Gly-492.

The protein belongs to the urocanase family. The cofactor is NAD(+).

The protein localises to the cytoplasm. It carries out the reaction 4-imidazolone-5-propanoate = trans-urocanate + H2O. Its pathway is amino-acid degradation; L-histidine degradation into L-glutamate; N-formimidoyl-L-glutamate from L-histidine: step 2/3. Functionally, catalyzes the conversion of urocanate to 4-imidazolone-5-propionate. The protein is Urocanate hydratase of Brucella ovis (strain ATCC 25840 / 63/290 / NCTC 10512).